Reading from the N-terminus, the 471-residue chain is Putative multidrug resistance protein MdtD (471 aa).

Over 1-11 (MTDLPDSTRWQ) the chain is Periplasmic. A helical membrane pass occupies residues 12 to 32 (LWIVAFGFFMQSLDTTIVNTA). At 33-48 (LPSMAQSLGESPLHMH) the chain is on the cytoplasmic side. Residues 49–69 (MVIVSYVLTVAVMLPASGWLA) form a helical membrane-spanning segment. At 70–76 (DKVGVRN) the chain is on the periplasmic side. A helical transmembrane segment spans residues 77 to 97 (IFFTAIVLFTLGSLFCALSGT). Over 98-101 (LNEL) the chain is Cytoplasmic. A helical membrane pass occupies residues 102–124 (LLARALQGVGGAMMVPVGRLTVM). The Periplasmic portion of the chain corresponds to 125–137 (KIVPREQYMAAMT). Residues 138 to 158 (FVTLPGQVGPLLGPALGGLLV) form a helical membrane-spanning segment. Residues 159–164 (EYASWH) lie on the Cytoplasmic side of the membrane. Residues 165–185 (WIFLINIPVGIIGAIATLMLM) form a helical membrane-spanning segment. The Periplasmic segment spans residues 186–196 (PNYTMQTRRFD). The chain crosses the membrane as a helical span at residues 197–217 (LSGFLLLAVGMAVLTLALDGS). Over 218 to 224 (KGTGLSP) the chain is Cytoplasmic. Residues 225–245 (LAITGLVAVGVVALVLYLLHA) form a helical membrane-spanning segment. Residues 246–262 (RNNHRALFSLKLFRTRT) lie on the Periplasmic side of the membrane. Residues 263 to 283 (FSLGLAGSFAGRIGSGMLPFM) traverse the membrane as a helical segment. The Cytoplasmic portion of the chain corresponds to 284–285 (TP). A helical transmembrane segment spans residues 286 to 306 (VFLQIGLGFSPFHAGLMMIPM). Topologically, residues 307–341 (VLGSMGMKRIVVQVVNRFGYRRVLVATTLGLSLVT) are periplasmic. A helical transmembrane segment spans residues 342–362 (LLFMTTALLGWYYVLPFVLFL). Residues 363–395 (QGMVNSTRFSSMNTLTLKDLPDNLASSGNSLLS) lie on the Cytoplasmic side of the membrane. Residues 396-416 (MIMQLSMSIGVTIAGLLLGLF) traverse the membrane as a helical segment. The Periplasmic segment spans residues 417 to 430 (GSQHVSVDSGTTQT). Residues 431 to 451 (VFMYTWLSMAFIIALPAFIFA) form a helical membrane-spanning segment. At 452 to 471 (RVPNDTHQNVAISRRKRSAQ) the chain is on the cytoplasmic side.

This sequence belongs to the major facilitator superfamily. TCR/Tet family.

It localises to the cell inner membrane. The chain is Putative multidrug resistance protein MdtD from Escherichia coli O127:H6 (strain E2348/69 / EPEC).